The sequence spans 158 residues: Phosphopantetheine adenylyltransferase (158 aa).

Thr9 is a substrate binding site. ATP is bound by residues 9–10 (TF) and His17. Substrate contacts are provided by Lys41, Leu73, and Arg87. Residues 88–90 (GVR), Glu98, and 123–129 (WSYVSST) each bind ATP.

This sequence belongs to the bacterial CoaD family. As to quaternary structure, homohexamer. It depends on Mg(2+) as a cofactor.

Its subcellular location is the cytoplasm. The catalysed reaction is (R)-4'-phosphopantetheine + ATP + H(+) = 3'-dephospho-CoA + diphosphate. The protein operates within cofactor biosynthesis; coenzyme A biosynthesis; CoA from (R)-pantothenate: step 4/5. In terms of biological role, reversibly transfers an adenylyl group from ATP to 4'-phosphopantetheine, yielding dephospho-CoA (dPCoA) and pyrophosphate. The polypeptide is Phosphopantetheine adenylyltransferase (Histophilus somni (strain 129Pt) (Haemophilus somnus)).